The chain runs to 451 residues: REST corepressor 3 (451 aa).

The disordered stretch occupies residues 1 to 55 (MPGMMEKGPELLGKSRSANGGAKSPAGGGGSSANGGLHFSEPESGCSSDDEHGDV). The 85-residue stretch at 55–139 (VGMRVGAEYQ…KSLADLPNFT (85 aa)) folds into the ELM2 domain. Lys76 participates in a covalent cross-link: Glycyl lysine isopeptide (Lys-Gly) (interchain with G-Cter in SUMO2). One can recognise an SANT domain in the interval 140–191 (PFPDEWTVEDKVLFEQAFSFHGKSFHRIQQMLPDKTIASLVKYYYSWKKTRS). Residues 204–275 (ANRHNQGDSD…SQRSKCRPPK (72 aa)) are disordered. 2 positions are modified to phosphoserine: Ser212 and Ser227. Residues 218-240 (EAHPMDGNDSDYDPKKEAKREGN) are compositionally biased toward basic and acidic residues. A Glycyl lysine isopeptide (Lys-Gly) (interchain with G-Cter in SUMO2) cross-link involves residue Lys249. The span at 261–273 (QHRHHSQRSKCRP) shows a compositional bias: basic residues. The stretch at 293-329 (AANTILRQLDMELISLKRQVQNAKQVNSALKQKMEGG) forms a coiled coil. The interval 333-451 (FKPPEAQTPQ…IQTDSQPSLH (119 aa)) is disordered. The segment covering 349–361 (PSPPAPSSTPTPT) has biased composition (pro residues). Over residues 375-384 (RPTLPAAPAL) the composition is skewed to low complexity. 2 positions are modified to asymmetric dimethylarginine: Arg401 and Arg413. Over residues 431–451 (VGGQQPPSLIGIQTDSQPSLH) the composition is skewed to polar residues.

The protein belongs to the CoREST family.

The protein resides in the nucleus. Its function is as follows. May act as a component of a corepressor complex that represses transcription. This chain is REST corepressor 3 (Rcor3), found in Mus musculus (Mouse).